The following is a 325-amino-acid chain: Ribosomal RNA small subunit methyltransferase C (325 aa).

Belongs to the methyltransferase superfamily. RsmC family. In terms of assembly, monomer.

Its subcellular location is the cytoplasm. The catalysed reaction is guanosine(1207) in 16S rRNA + S-adenosyl-L-methionine = N(2)-methylguanosine(1207) in 16S rRNA + S-adenosyl-L-homocysteine + H(+). Its function is as follows. Specifically methylates the guanine in position 1207 of 16S rRNA in the 30S particle. This is Ribosomal RNA small subunit methyltransferase C from Alcanivorax borkumensis (strain ATCC 700651 / DSM 11573 / NCIMB 13689 / SK2).